A 215-amino-acid chain; its full sequence is Vesicle-trafficking protein SEC22b-B (215 aa).

The Cytoplasmic portion of the chain corresponds to 1 to 190 (MVLLTMIARL…RSDAKYLNTR (190 aa)). The Longin domain occupies 6 to 119 (MIARLADGLP…YSFIEFDTYI (114 aa)). The v-SNARE coiled-coil homology domain occupies 134–194 (NLSNINTELQ…KYLNTRSTYA (61 aa)). The chain crosses the membrane as a helical span at residues 191-213 (STYAKLAAGGVFFIMLIVYIRFW). Topologically, residues 214–215 (WL) are lumenal.

It belongs to the synaptobrevin family. In terms of assembly, component of 2 distinct SNARE complexes.

The protein localises to the endoplasmic reticulum membrane. Its subcellular location is the endoplasmic reticulum-Golgi intermediate compartment membrane. It localises to the golgi apparatus. The protein resides in the cis-Golgi network membrane. It is found in the trans-Golgi network membrane. The protein localises to the melanosome. SNARE involved in targeting and fusion of ER-derived transport vesicles with the Golgi complex as well as Golgi-derived retrograde transport vesicles with the ER. The chain is Vesicle-trafficking protein SEC22b-B from Danio rerio (Zebrafish).